We begin with the raw amino-acid sequence, 577 residues long: Sulfite reductase [NADPH] hemoprotein beta-component (577 aa).

The [4Fe-4S] cluster site is built by Cys-440, Cys-446, Cys-486, and Cys-490. Cys-490 is a binding site for siroheme.

This sequence belongs to the nitrite and sulfite reductase 4Fe-4S domain family. In terms of assembly, alpha(8)-beta(8). The alpha component is a flavoprotein, the beta component is a hemoprotein. It depends on siroheme as a cofactor. The cofactor is [4Fe-4S] cluster.

It carries out the reaction hydrogen sulfide + 3 NADP(+) + 3 H2O = sulfite + 3 NADPH + 4 H(+). Its pathway is sulfur metabolism; hydrogen sulfide biosynthesis; hydrogen sulfide from sulfite (NADPH route): step 1/1. Functionally, component of the sulfite reductase complex that catalyzes the 6-electron reduction of sulfite to sulfide. This is one of several activities required for the biosynthesis of L-cysteine from sulfate. The polypeptide is Sulfite reductase [NADPH] hemoprotein beta-component (Vibrio cholerae serotype O1 (strain ATCC 39541 / Classical Ogawa 395 / O395)).